A 2245-amino-acid polypeptide reads, in one-letter code: Basic helix-loop-helix domain-containing protein USF3 (2245 aa).

Positions 1–28 are disordered; the sequence is MPEMTENETPTKKQHRKKNRETHNAVER. The 52-residue stretch at 18-69 folds into the bHLH domain; it reads KNRETHNAVERHRKKKINAGINRIGELIPCSPALKQSKNMILDQAFKYITEL. Residues 77–112 adopt a coiled-coil conformation; it reads LLNGGNNEQAEEIKKLRKQLEEIQKENGRYIELLKA. Disordered regions lie at residues 271 to 290, 447 to 470, 881 to 900, 906 to 933, 1015 to 1041, 1164 to 1238, 1307 to 1331, 1460 to 1624, 1636 to 1664, 1736 to 1764, 1777 to 1815, 1834 to 1859, and 1891 to 2031; these read LHTC…QENP, SQTP…TSNH, SKSK…VTSE, AAKS…ALSD, KNPQ…IVDS, PSEA…SITS, IPNS…AKRA, IKQQ…VSGH, LEQQ…ERNR, TFKP…GNPV, ISQN…ENTC, GSQR…YNCP, and STLN…QPAT. The span at 273–288 shows a compositional bias: polar residues; sequence TCLNDQNSSENKNGQE. Residues 881–896 are compositionally biased toward low complexity; sequence SKSKSAEKSSPPSQES. Polar residues predominate over residues 912 to 925; that stretch reads STPNLQQETSQDKP. 2 stretches are compositionally biased toward polar residues: residues 1185–1202 and 1219–1238; these read GTGQ…QGSI and IKTS…SITS. Positions 1319 to 1331 are enriched in basic and acidic residues; sequence PSHESRKDSAKRA. Low complexity predominate over residues 1462–1478; the sequence is QQQQQQQQQQQQQQQQQ. Polar residues-rich tracts occupy residues 1501 to 1520 and 1528 to 1538; these read SVHS…QEVQ and VQGTQTSQLSL. The span at 1560-1569 shows a compositional bias: low complexity; that stretch reads QQMQQQMQQH. A compositionally biased stretch (polar residues) spans 1570-1585; the sequence is FGSSQTEKSCENPSTS. Residues 1593–1624 are compositionally biased toward low complexity; sequence QNHLNQDIMHQQQDVGSRQQGSGVSSEHVSGH. Positions 1636 to 1654 are enriched in polar residues; sequence LEQQMVSQPSIVTRSSDMT. 2 stretches are compositionally biased toward polar residues: residues 1904 to 1923 and 1998 to 2007; these read GDIQ…SNPM and SGNQRQSTVF.

It localises to the nucleus. Its function is as follows. Involved in the negative regulation of epithelial-mesenchymal transition, the process by which epithelial cells lose their polarity and adhesion properties to become mesenchymal cells with enhanced migration and invasive properties. The polypeptide is Basic helix-loop-helix domain-containing protein USF3 (Homo sapiens (Human)).